We begin with the raw amino-acid sequence, 264 residues long: Acyl-[acyl-carrier-protein]--UDP-N-acetylglucosamine O-acyltransferase (264 aa).

This sequence belongs to the transferase hexapeptide repeat family. LpxA subfamily. Homotrimer.

The protein localises to the cytoplasm. It catalyses the reaction a (3R)-hydroxyacyl-[ACP] + UDP-N-acetyl-alpha-D-glucosamine = a UDP-3-O-[(3R)-3-hydroxyacyl]-N-acetyl-alpha-D-glucosamine + holo-[ACP]. It participates in glycolipid biosynthesis; lipid IV(A) biosynthesis; lipid IV(A) from (3R)-3-hydroxytetradecanoyl-[acyl-carrier-protein] and UDP-N-acetyl-alpha-D-glucosamine: step 1/6. Its function is as follows. Involved in the biosynthesis of lipid A, a phosphorylated glycolipid that anchors the lipopolysaccharide to the outer membrane of the cell. The protein is Acyl-[acyl-carrier-protein]--UDP-N-acetylglucosamine O-acyltransferase of Haemophilus ducreyi (strain 35000HP / ATCC 700724).